Consider the following 598-residue polypeptide: NADH-quinone oxidoreductase subunit C/D (598 aa).

Positions Met-1 to Glu-189 are NADH dehydrogenase I subunit C. The segment at Asp-213–Arg-598 is NADH dehydrogenase I subunit D.

This sequence in the N-terminal section; belongs to the complex I 30 kDa subunit family. It in the C-terminal section; belongs to the complex I 49 kDa subunit family. In terms of assembly, NDH-1 is composed of 13 different subunits. Subunits NuoB, CD, E, F, and G constitute the peripheral sector of the complex.

The protein resides in the cell inner membrane. The catalysed reaction is a quinone + NADH + 5 H(+)(in) = a quinol + NAD(+) + 4 H(+)(out). Its function is as follows. NDH-1 shuttles electrons from NADH, via FMN and iron-sulfur (Fe-S) centers, to quinones in the respiratory chain. The immediate electron acceptor for the enzyme in this species is believed to be ubiquinone. Couples the redox reaction to proton translocation (for every two electrons transferred, four hydrogen ions are translocated across the cytoplasmic membrane), and thus conserves the redox energy in a proton gradient. The chain is NADH-quinone oxidoreductase subunit C/D from Yersinia pseudotuberculosis serotype O:1b (strain IP 31758).